Here is a 595-residue protein sequence, read N- to C-terminus: Elongation factor 4 (595 aa).

The tr-type G domain occupies 2-184; sequence KNIRNFSIIA…QIVERIPTPK (183 aa). Residues 14 to 19 and 131 to 134 each bind GTP; these read DHGKST and NKID.

It belongs to the TRAFAC class translation factor GTPase superfamily. Classic translation factor GTPase family. LepA subfamily.

The protein resides in the cell inner membrane. It carries out the reaction GTP + H2O = GDP + phosphate + H(+). Functionally, required for accurate and efficient protein synthesis under certain stress conditions. May act as a fidelity factor of the translation reaction, by catalyzing a one-codon backward translocation of tRNAs on improperly translocated ribosomes. Back-translocation proceeds from a post-translocation (POST) complex to a pre-translocation (PRE) complex, thus giving elongation factor G a second chance to translocate the tRNAs correctly. Binds to ribosomes in a GTP-dependent manner. This Vesicomyosocius okutanii subsp. Calyptogena okutanii (strain HA) protein is Elongation factor 4.